Here is a 172-residue protein sequence, read N- to C-terminus: MVNLILVGPMGAGKSTIGRLLAKELHLAFKDSDKEIEQRCGANIPWIFDVEGEVGFREREQAMLTELCAADGMVIATGGGAVMRDGNRQVLRAGGRVVYLHASVEHQIARTARDRNRPLLQKPNPGQILRDLMALRDPLYREIADVVVETDERPPRLVVQEILERLRKLPPR.

11–16 (GAGKST) is a binding site for ATP. S15 provides a ligand contact to Mg(2+). Substrate-binding residues include D33, R57, and G79. R117 contacts ATP. A substrate-binding site is contributed by R136. Position 153 (R153) interacts with ATP.

The protein belongs to the shikimate kinase family. As to quaternary structure, monomer. Requires Mg(2+) as cofactor.

It is found in the cytoplasm. It carries out the reaction shikimate + ATP = 3-phosphoshikimate + ADP + H(+). It participates in metabolic intermediate biosynthesis; chorismate biosynthesis; chorismate from D-erythrose 4-phosphate and phosphoenolpyruvate: step 5/7. In terms of biological role, catalyzes the specific phosphorylation of the 3-hydroxyl group of shikimic acid using ATP as a cosubstrate. The protein is Shikimate kinase of Pseudomonas aeruginosa (strain LESB58).